We begin with the raw amino-acid sequence, 518 residues long: Cytochrome P450 monooxygenase atnE (518 aa).

Residues 11-31 traverse the membrane as a helical segment; it reads FLAAFAVWMGVVVLAFAIFCV. Residue Asn-184 is glycosylated (N-linked (GlcNAc...) asparagine). Cys-458 provides a ligand contact to heme.

The protein belongs to the cytochrome P450 family. Heme serves as cofactor.

The protein resides in the membrane. The protein operates within secondary metabolite biosynthesis. In terms of biological role, cytochrome P450 monooxygenase; part of the gene cluster that mediates the biosynthesis of aspercryptins, linear lipopeptides built from six amino acids including 2 highly unusual and nonproteogenic amino acids, 2-amino-octanoic acid (2aoa) and 2-amino-dodecanol (2adol). The core structure of aspercryptins is as follows: Ser/Ala-Thr-Ile/Val-2aoa-Asn-2adol. The first step of aspercryptin biosynthesis is the generation of the fatty acid precursors, octanoic and dodecanoic acids, by the FAS subunits atnF and atnM. The fatty acid precursors are likely transformed into the corresponding alpha-amino fatty acids in three steps. First, they are hydroxylated by the cytochrome P450 monooxygenase atnE, then oxidized to the corresponding alpha-keto acids by the NAD(P)-dependent oxidoreductase atnD, and finally converted to the alpha-amino fatty acids by the PLP-dependent aminotransferases atnH or atnJ. the alpha-amino fatty acids, 2-amino-octanoic and 2-amino-dodecanoic acids, are recognized, activated, and covalently tethered to the NRPS atnA by its fourth and sixth adenylation domains. The second module of atnA is the Thr module and contains an epimerase (E) domain responsible for the epimerization of Thr to D-allo-Thr. Additionally, despite atnA having only one epimerase domain, the first amino acid of aspercryptin A1 is D-Ser, suggesting that serine is either loaded directly as D-Ser on the first module or that the epimerase domain in the threonine module epimerizes both L-Ser and L-Thr. After condensation of the hexapeptide of aspercryptin, the C-terminal reductase (TE) domain might be involved in the reductive release and production of the aldehyde hexapeptide. Further reduction would generate aspercryptins. The variety of aspercryptins produced reflects the flexibility of the atnA NRPS, allowing incorporation of alanine instead of serine, valine for isoleucine, and a C10 fatty amino alcohol instead of the C12 version. AtnB seems to be involved in the selectivity for Ile versus Val by the third module. Moreover, type B, C and D aspercryptins have an additional N-terminal cichorine, acetyl and propionyl group respectively. This Emericella nidulans (strain FGSC A4 / ATCC 38163 / CBS 112.46 / NRRL 194 / M139) (Aspergillus nidulans) protein is Cytochrome P450 monooxygenase atnE.